A 318-amino-acid polypeptide reads, in one-letter code: Cephalosporin-C deacetylase (318 aa).

A substrate-binding site is contributed by Y91. Residue S181 is the Nucleophile of the active site. Residues D269 and H298 each act as charge relay system in the active site.

Belongs to the carbohydrate esterase 7 family. As to quaternary structure, homohexamer.

The protein resides in the cytoplasm. It catalyses the reaction Deacetylation of xylans and xylo-oligosaccharides.. The enzyme catalyses cephalosporin C + H2O = deacetylcephalosporin C + acetate + H(+). Esterase that removed acetyl groups from a number of O-acetylated small substrates, such as acetylated xylose, short xylooligosaccharides and cephalosporin C. Has no activity towards polymeric acetylated xylan. Cannot cleave amide linkages. The sequence is that of Cephalosporin-C deacetylase (cah) from Bacillus subtilis (strain 168).